A 368-amino-acid chain; its full sequence is MSTILEKISAIESEMARTQKNKATSAHLGLLKAKLAKLRRELISPKGGGGGTGEAGFEVAKTGDARVGFVGFPSVGKSTLLSNLAGVYSEVAAYEFTTLTTVPGCIKYKGAKIQLLDLPGIIEGAKDGKGRGRQVIAVARTCNLIFMVLDCLKPLGHKKLLEHELEGFGIRLNKKPPNIYYKRKDKGGINLNSMVPQSELDTDLVKTILSEYKIHNADITLRYDATSDDLIDVIEGNRIYIPCIYLLNKIDQISIEELDVIYKIPHCVPISAHHHWNFDDLLELMWEYLRLQRIYTKPKGQLPDYNSPVVLHNERTSIEDFCNKLHRSIAKEFKYALVWGSSVKHQPQKVGIEHVLNDEDVVQIVKKV.

A (3S)-3-hydroxylysine modification is found at Lys-22. Residues 65-290 enclose the OBG-type G domain; it reads ARVGFVGFPS…LLELMWEYLR (226 aa). GTP-binding positions include 71 to 78, 117 to 121, and 248 to 251; these read GFPSVGKS, DLPGI, and NKID. In terms of domain architecture, TGS spans 290 to 366; that stretch reads RLQRIYTKPK…NDEDVVQIVK (77 aa).

Belongs to the TRAFAC class OBG-HflX-like GTPase superfamily. OBG GTPase family. Post-translationally, hydroxylated (with S stereochemistry) at C-3 of Lys-22 by JMJD7. As to expression, expressed in posterior-lateral epidermis of the maxillary lobe.

In terms of biological role, catalyzes the conversion of GTP to GDP through hydrolysis of the gamma-phosphate bond in GTP. Dfd/deformed is required to activate 128up in maxillary segment cells. This is Guanylate binding protein 128up from Drosophila melanogaster (Fruit fly).